A 977-amino-acid chain; its full sequence is DNA-directed RNA polymerase 3A, chloroplastic (977 aa).

A chloroplast-targeting transit peptide spans 1-72; the sequence is MASTASYSPS…NNIQSQTTVC (72 aa). Residues Asp678, Lys753, and Asp910 contribute to the active site.

Belongs to the phage and mitochondrial RNA polymerase family.

The protein resides in the plastid. It localises to the chloroplast. It carries out the reaction RNA(n) + a ribonucleoside 5'-triphosphate = RNA(n+1) + diphosphate. Functionally, DNA-dependent RNA polymerase catalyzes the transcription of DNA into RNA using the four ribonucleoside triphosphates as substrates. In Nicotiana tabacum (Common tobacco), this protein is DNA-directed RNA polymerase 3A, chloroplastic (RPOT3-SYL).